The sequence spans 381 residues: Alkanesulfonate monooxygenase (381 aa).

It belongs to the SsuD family. As to quaternary structure, homotetramer.

It catalyses the reaction an alkanesulfonate + FMNH2 + O2 = an aldehyde + FMN + sulfite + H2O + 2 H(+). Catalyzes the desulfonation of aliphatic sulfonates. The protein is Alkanesulfonate monooxygenase of Enterobacter sp. (strain 638).